Reading from the N-terminus, the 313-residue chain is Porphobilinogen deaminase (313 aa).

C241 carries the S-(dipyrrolylmethanemethyl)cysteine modification.

Belongs to the HMBS family. As to quaternary structure, monomer. Dipyrromethane serves as cofactor.

The enzyme catalyses 4 porphobilinogen + H2O = hydroxymethylbilane + 4 NH4(+). Its pathway is porphyrin-containing compound metabolism; protoporphyrin-IX biosynthesis; coproporphyrinogen-III from 5-aminolevulinate: step 2/4. It participates in porphyrin-containing compound metabolism; chlorophyll biosynthesis. Functionally, tetrapolymerization of the monopyrrole PBG into the hydroxymethylbilane pre-uroporphyrinogen in several discrete steps. This chain is Porphobilinogen deaminase, found in Chlorobium phaeobacteroides (strain DSM 266 / SMG 266 / 2430).